A 102-amino-acid chain; its full sequence is Small ribosomal subunit protein uS10 (102 aa).

It belongs to the universal ribosomal protein uS10 family. As to quaternary structure, part of the 30S ribosomal subunit.

In terms of biological role, involved in the binding of tRNA to the ribosomes. This Acidithiobacillus ferrooxidans (strain ATCC 53993 / BNL-5-31) (Leptospirillum ferrooxidans (ATCC 53993)) protein is Small ribosomal subunit protein uS10.